The sequence spans 203 residues: Urease accessory protein UreG (203 aa).

Gly10 to Thr17 serves as a coordination point for GTP.

Belongs to the SIMIBI class G3E GTPase family. UreG subfamily. In terms of assembly, homodimer. UreD, UreF and UreG form a complex that acts as a GTP-hydrolysis-dependent molecular chaperone, activating the urease apoprotein by helping to assemble the nickel containing metallocenter of UreC. The UreE protein probably delivers the nickel.

The protein localises to the cytoplasm. Its function is as follows. Facilitates the functional incorporation of the urease nickel metallocenter. This process requires GTP hydrolysis, probably effectuated by UreG. In Lachnoclostridium phytofermentans (strain ATCC 700394 / DSM 18823 / ISDg) (Clostridium phytofermentans), this protein is Urease accessory protein UreG.